Consider the following 450-residue polypeptide: Adenylosuccinate lyase (450 aa).

N(6)-(1,2-dicarboxyethyl)-AMP-binding positions include 9–10 (RY), 75–77 (HHD), and 101–102 (TS). H149 serves as the catalytic Proton donor/acceptor. Q223 is a N(6)-(1,2-dicarboxyethyl)-AMP binding site. The active-site Proton donor/acceptor is S273. N(6)-(1,2-dicarboxyethyl)-AMP-binding positions include S274, 279-281 (KRN), and 318-322 (SVERV).

This sequence belongs to the lyase 1 family. Adenylosuccinate lyase subfamily. In terms of assembly, homotetramer. Residues from neighboring subunits contribute catalytic and substrate-binding residues to each active site.

It catalyses the reaction N(6)-(1,2-dicarboxyethyl)-AMP = fumarate + AMP. The catalysed reaction is (2S)-2-[5-amino-1-(5-phospho-beta-D-ribosyl)imidazole-4-carboxamido]succinate = 5-amino-1-(5-phospho-beta-D-ribosyl)imidazole-4-carboxamide + fumarate. The protein operates within purine metabolism; AMP biosynthesis via de novo pathway; AMP from IMP: step 2/2. It functions in the pathway purine metabolism; IMP biosynthesis via de novo pathway; 5-amino-1-(5-phospho-D-ribosyl)imidazole-4-carboxamide from 5-amino-1-(5-phospho-D-ribosyl)imidazole-4-carboxylate: step 2/2. Catalyzes two reactions in de novo purine nucleotide biosynthesis. Catalyzes the breakdown of 5-aminoimidazole- (N-succinylocarboxamide) ribotide (SAICAR or 2-[5-amino-1-(5-phospho-beta-D-ribosyl)imidazole-4-carboxamido]succinate) to 5-aminoimidazole-4-carboxamide ribotide (AICAR or 5-amino-1-(5-phospho-beta-D-ribosyl)imidazole-4-carboxamide) and fumarate, and of adenylosuccinate (ADS or N(6)-(1,2-dicarboxyethyl)-AMP) to adenosine monophosphate (AMP) and fumarate. The sequence is that of Adenylosuccinate lyase (purB) from Pyrococcus horikoshii (strain ATCC 700860 / DSM 12428 / JCM 9974 / NBRC 100139 / OT-3).